The primary structure comprises 95 residues: UPF0125 protein BUsg_244 (95 aa).

It belongs to the UPF0125 (RnfH) family.

The chain is UPF0125 protein BUsg_244 from Buchnera aphidicola subsp. Schizaphis graminum (strain Sg).